The primary structure comprises 1485 residues: MARNFRFMMDQKDIVRFLTTTVDSFIQDRLINKEQRTQHKEQCAERLAAEDGSGDKDTEVEYSDQAVLANLDWGIEALEEAINTYNMETKLARLDYAEKMLQVCAMLNPKQKIAGVPNSYLSAWAHLNLSYLWKLRNNVQNCISHALEMFIVDPFFTRIDFAPELWKSLFLPHMSSIVGWYSEERHRLMMEVIPDSADLSFTADFEQFFNESLVLTMRPHQLEKLQKLEQLYGESLDENTKLYAKYYNDCMNSDSSSSKKAVPMLPIAEPPMTPLHELSRTIPDFVKFGPILPKSAGFSLAPRSKDVLNETIRENVTSSNLKEEKLSIWGAKDTIIEENEDDSDSELENESVDSDDKNNIFSPGMKMMKYEGVETKVDLSCQRNQIPSPDIFSPLDSPRTAPNNSSPNPDMHSKRDSKFLRLSSSRIREPTISDSLTSSPDISIDNISNADNEVMVLKNIQRKNDNQTLSMNHENENSLILNGSSLCESDDGYQSFNSLPKLEKLSMGSKPPKDFVCPITGQIFCDPVTLETGQTYERKAIQEWLRTGNTTCPITRQPLSASILPKTNYVLKRLITSWKEQNPELAQEFSNVNTPRGSSCSPSAKDIPMLSTRQRTTDSPNHKNKDYARQRSNRFMPAAITTSPTSVLSQAAVETIVNSLKPYISSLCTSENLPECEEAVLKIARLLKDSKTNPQIHSYLSKPTIINGLVEILSASRNREVLRTSIYILSELIFTDDSVAETLNSVDSDFDCLATLLKNGLAEAALLIYQLRPVFAQLSAHELIPSLVDVIQNKNEELDDFQLVIDPKDAAIAILEQTLMGGDEYSRSLNASSVISANGIPTLVKYLERMEGRRSVVSVLLCCMQAEKSCKNLIANRIELSPVLELFHSGNDSVRGTCVEFLSELVQLNRRTSCNQILHTIKDEGAFSTMHTFLVYLQMAPMEHQLAVASLLLQLDLLAEPRKMSIYREEAVETLIEALWQKDFSNTQMKALDALLFLIGHISSSGKSYTEAWLLKIAGFDQPYNALMKVEQLGQHDNDLIETMEDEKNALNSWQKRIASVLCNHENGSIFKALEECLKSNSLKMAKSCLVLATWLTHMLYTLPDTGVRDVARKSLLEEVINVLQSSKNLEEKILATLALKTFISDPSTHEALRVYAKSIYRTLRRLKKYSVVAVDIMKVILNLKSVDVTELWSCKEVVELDLSSNGEVLSMVYLNGQVLSGHTDGTIKVWDARKRIPRVIQETHEHTKAVTSLCSSGDRLYSGSLDKTIRVWTIKSDGIKCIDVYDIKEAVHELAANDKLACYVSQGTGVKVFNWSEAPKLINFSKYVKSLAVAGDKLYCGCSGYSIQEVDLSTYTSNSFFTGTRKLLGKQTIHSLQIHDDYLFACGSSVDATAGKIFSLSQKMVVGSLSTGLDIHRIAINSDFIFAGTKFGTIEVWLKDKFTRVASIKMAGGHTKITSLVSDVDGMMLFVGSSDGKIQVWALD.

The span at 337–353 (EENEDDSDSELENESVD) shows a compositional bias: acidic residues. Disordered regions lie at residues 337–363 (EENEDDSDSELENESVDSDDKNNIFSP) and 384–417 (NQIPSPDIFSPLDSPRTAPNNSSPNPDMHSKRDS). The U-box domain maps to 510–585 (KPPKDFVCPI…TSWKEQNPEL (76 aa)). 4 WD repeats span residues 1204-1241 (SSNGEVLSMVYLNGQVLSGHTDGTIKVWDARKRIPRVI), 1246-1283 (EHTKAVTSLCSSGDRLYSGSLDKTIRVWTIKSDGIKCI), 1409-1448 (SLSTGLDIHRIAINSDFIFAGTKFGTIEVWLKDKFTRVAS), and 1454-1485 (GHTKITSLVSDVDGMMLFVGSSDGKIQVWALD).

Expressed in roots and nodules, and at very low levels in calli and seedling shoots.

It catalyses the reaction S-ubiquitinyl-[E2 ubiquitin-conjugating enzyme]-L-cysteine + [acceptor protein]-L-lysine = [E2 ubiquitin-conjugating enzyme]-L-cysteine + N(6)-ubiquitinyl-[acceptor protein]-L-lysine.. It functions in the pathway protein modification; protein ubiquitination. Putative E3 ubiquitin-protein ligase involved in the rhizobial infection process. Plays an important role in the early steps of infection thread formation and in growth and differentiation of nodules. The chain is Putative E3 ubiquitin-protein ligase LIN-1 from Lotus japonicus (Lotus corniculatus var. japonicus).